The chain runs to 148 residues: Prefoldin subunit alpha (148 aa).

This sequence belongs to the prefoldin subunit alpha family. As to quaternary structure, heterohexamer of two alpha and four beta subunits.

Its subcellular location is the cytoplasm. In terms of biological role, molecular chaperone capable of stabilizing a range of proteins. Seems to fulfill an ATP-independent, HSP70-like function in archaeal de novo protein folding. The chain is Prefoldin subunit alpha (pfdA) from Pyrococcus horikoshii (strain ATCC 700860 / DSM 12428 / JCM 9974 / NBRC 100139 / OT-3).